The following is a 512-amino-acid chain: MMRKALLALCVATAFAVAQAQNVAYPNFPYCQCIKSPSPYSLEPVVKSNRTGQYCFTLRVTKPSPSATGYCATKADIKKIEINVNQVCDVFGNVVNATLNGVPTKVGPAFDTPPDGPNTSRILRFTQLNLGLDSDGAMLCITLGQNDKGKGCTTLEDLCAPPAGAPKGTCSLALFDSKPDCCPISRVSPPAPPPPPPPPPPEPVAVPITPPCKTCVYATITALPPLLFPFQLTPSICQSVADKIAGDLEMIVTSYSIGYSGATITCSGNVIKVCASFSLPPGAPYTGLQADISNALTFWLSLLAPSTGCPAYFANHQVTVTVGGDGDPNSVTCLEGTATTTCKPGNPDFPKCECETKPAATRFAALPTLTQEPGRPSNRTNSTLYCFTLQVVAPLNPNGLCGNTTTLLKAELWGNDIPTQRRKILALAFKAAGASSPLRYLSPSWGSAGEQTLKVSGLNWDASQADGAKICMELSNDTNLKTFCNTGQDTCWINLFSPDKQCCPLFAASLTP.

The N-terminal stretch at 1–18 (MMRKALLALCVATAFAVA) is a signal peptide. 7 N-linked (GlcNAc...) asparagine glycosylation sites follow: Asn49, Asn96, Asn118, Asn378, Asn381, Asn403, and Asn476.

The protein resides in the secreted. Its subcellular location is the extracellular space. It is found in the extracellular matrix. Its function is as follows. May be involved in conversion of asexual males and females to the sexual pathway. The protein is Perphorin-1 of Volvox carteri (Green alga).